The chain runs to 102 residues: MAKQKIRIRLKAYDHRVLDQSAEKIVETAKRSGASVSGPIPLPTEKSVYTILRAVHKYKDSREQFEMRTHKRLIDIINPTPQTVDALMRLDLPSGVDIEIKL.

This sequence belongs to the universal ribosomal protein uS10 family. In terms of assembly, part of the 30S ribosomal subunit.

In terms of biological role, involved in the binding of tRNA to the ribosomes. This is Small ribosomal subunit protein uS10 from Shouchella clausii (strain KSM-K16) (Alkalihalobacillus clausii).